Consider the following 1977-residue polypeptide: Echinoderm microtubule-associated protein-like 5 (1977 aa).

WD repeat units follow at residues 59–100, 104–145, 148–187, 195–233, 235–273, 280–321, 323–362, 364–403, 406–445, 449–488, and 561–601; these read GHSD…TVSV, VHTH…MLSM, GHTD…LTPK, GDLQ…RTIQ, AHTA…TVID, GYKG…LIMQ, HCEG…LIAR, NMDE…EVVH, DRKE…KKVG, GSLS…EVTS, and GHSA…KLKD. Positions 609-629 are disordered; sequence ESLTESNSDESDSDLSDVPEL. Acidic residues predominate over residues 615-629; it reads NSDESDSDLSDVPEL. WD repeat units follow at residues 725-766, 770-811, 814-853, 861-900, 901-940, 996-1035, 1038-1077, 1080-1120, and 1236-1276; these read GHDD…PLSI, YHQY…KLSV, GSKD…LIGR, GKND…KTVK, AHDG…KTYA, HMEG…CMLA, KLKK…DLVS, HRKD…RVGV, and AHST…HREK. Disordered regions lie at residues 1274–1299 and 1323–1363; these read REKK…SDVT and PHLQ…NVGK. Over residues 1281 to 1294 the composition is skewed to acidic residues; sequence SEESDTDSEEDGGY. The segment covering 1326-1337 has biased composition (basic and acidic residues); the sequence is QQKEPSVDERQG. WD repeat units lie at residues 1420 to 1471, 1475 to 1516, 1519 to 1558, 1568 to 1606, 1608 to 1654, 1699 to 1739, 1741 to 1782, 1783 to 1822, 1895 to 1934, and 1940 to 1977; these read EHND…TLSI, SHSK…KIAS, GHNQ…LLSK, ARMQ…RVVA, AHNG…RAFR, GHVD…MLNK, NLGH…GKKR, DRRC…TLNR, AEKA…KFAK, and GHSP…HTPH.

This sequence belongs to the WD repeat EMAP family. As to expression, highly expressed in brain, especially in hippocampus, cerebellum and olfactory bulb (at protein level).

The protein resides in the cytoplasm. It is found in the cytoskeleton. May modify the assembly dynamics of microtubules, such that microtubules are slightly longer, but more dynamic. The sequence is that of Echinoderm microtubule-associated protein-like 5 (Eml5) from Rattus norvegicus (Rat).